The sequence spans 187 residues: Early E3 20.6 kDa glycoprotein (187 aa).

N-linked (GlcNAc...) asparagine; by host glycosylation is found at Asn-30, Asn-73, Asn-117, Asn-134, and Asn-135.

Belongs to the adenoviridae E3_20 family.

The polypeptide is Early E3 20.6 kDa glycoprotein (Human adenovirus B serotype 35 (HAdV-35)).